An 836-amino-acid polypeptide reads, in one-letter code: Protein O-mannosyl-transferase TMTC2 (836 aa).

A helical membrane pass occupies residues 1–21; the sequence is MIAELVSSALGLALYLNTLSA. The Extracellular portion of the chain corresponds to 22-77; it reads DFCYDDSRAIKTNQDLLPETPWTHIFYNDFWGTLLTHSGSHKSYRPLCTLSFRLNH. The chain crosses the membrane as a helical span at residues 78–98; that stretch reads AIGGLNPWSYHLVNVLLHAAV. Residues 99–107 are Cytoplasmic-facing; that stretch reads TGLFTRFSK. A helical membrane pass occupies residues 108 to 128; it reads ALLGDGYWTFMAGLMFASHPI. Residues 129–132 are Extracellular-facing; sequence HTEA. The helical transmembrane segment at 133–153 threads the bilayer; that stretch reads VAGIVGRADVGASLFFLLSLL. The Cytoplasmic portion of the chain corresponds to 154–168; sequence CYIKHCSTRGYSART. Helical transmembrane passes span 169–184 and 185–204; these read WGWFLGTGLCAGCSML and WKEQGVTVLAVSAVYDVFVF. The Cytoplasmic segment spans residues 205–220; sequence HRLKMKQILPTIYKRK. A helical membrane pass occupies residues 221 to 241; that stretch reads NLSLFLSISLLTFWGTCLLGA. At 242 to 312 the chain is on the extracellular side; sequence RLYWMGNKPP…KTVCDWRNLH (71 aa). The helical transmembrane segment at 313 to 333 threads the bilayer; it reads TVAFYSGLLLLAYCGLKNPSL. Residues 334–392 are Cytoplasmic-facing; that stretch reads EGECNGKALTNGKQNANGHSCHSDVEYRNSEMKPSFASKVENGIKNCVPQRTQLPSTEN. The helical transmembrane segment at 393-415 threads the bilayer; the sequence is IVILSLSLLIIPFIPATNLFFYV. The Extracellular segment spans residues 416-422; sequence GFVIAER. Residues 423 to 443 form a helical membrane-spanning segment; the sequence is VLYIPSMGFCLLITVGARALY. Topologically, residues 444-449 are cytoplasmic; that stretch reads VKVQKR. A helical membrane pass occupies residues 450-470; sequence FLKSLVFYATATLIVFYGVKT. Over 471-836 the chain is Extracellular; sequence AIRNGDWQNE…EKQGLKTSKT (366 aa). 9 TPR repeats span residues 493 to 526, 527 to 560, 561 to 594, 606 to 639, 643 to 676, 677 to 710, 711 to 744, 745 to 778, and 779 to 812; these read AKAWGNLGNVLKSQSKISEAESAYRNALFYRSNM, ADMLYNLGLLLQENSRFAEALHYYKLAIGSRPTL, ASAYLNTGIILMNQGKTEEARRTFLKCSEIPDEN, TSCLYNLGKLYHEQGRYEEALSVYREAIQKMPRH, QSLYNMMGEAYMRLSKLPEAEHWYMESLRSKTDH, IPAHLTYGKLLALTGRKSEAEKFFLKAIELDPTK, GNCYMHYGQFLLEESRLTEAAEMAKKAAELDNTE, FDVVFNAAHMLRQASLNEAAEKYYDLAARLRPNY, and PAALMNLGAILHLNGRLQKAEANYLRALQLKPDD.

Belongs to the TMTC family.

The protein localises to the membrane. It localises to the endoplasmic reticulum. The catalysed reaction is a di-trans,poly-cis-dolichyl beta-D-mannosyl phosphate + L-seryl-[protein] = 3-O-(alpha-D-mannosyl)-L-seryl-[protein] + a di-trans,poly-cis-dolichyl phosphate + H(+). The enzyme catalyses a di-trans,poly-cis-dolichyl beta-D-mannosyl phosphate + L-threonyl-[protein] = 3-O-(alpha-D-mannosyl)-L-threonyl-[protein] + a di-trans,poly-cis-dolichyl phosphate + H(+). The protein operates within protein modification; protein glycosylation. Transfers mannosyl residues to the hydroxyl group of serine or threonine residues. The 4 members of the TMTC family are O-mannosyl-transferases dedicated primarily to the cadherin superfamily, each member seems to have a distinct role in decorating the cadherin domains with O-linked mannose glycans at specific regions. Also acts as O-mannosyl-transferase on other proteins such as PDIA3. The protein is Protein O-mannosyl-transferase TMTC2 of Mus musculus (Mouse).